Here is a 352-residue protein sequence, read N- to C-terminus: MDIVLEIWDTFIGDRVYSALLPLSLSSTVSLPGLTNAANSSLSLFGASKPFVYEPATQLFRLEPSKYAYLSAWPRNNIYRQFLSFFLIVWIFGIIVYFISATLSYIFIWDKTTVKHPKFLKNQIPMEIAQTMRSMPVMSLLTAPFLVAEVRGYAKLYDSVDEEPFPYYSILQFPLFIAFTDFCIYWIHRGLHHPLIYKSLHKPHHKWIMPSPFASHAFHPLDGWSQSVPYHVFPFIFPLQKLAYVFLFGFINLWTVMIHDGEYVANSPIINGAACHTMHHLYFNYNYGQFTTLWDRLGGSYRKPNEELFRRETKMDEAEWKRQTKEMETILKTVEGEDDRKYLSQEEAKKDL.

An N-linked (GlcNAc...) asparagine glycan is attached at Asn-39. 3 helical membrane passes run 82 to 102 (FLSF…ISAT), 128 to 147 (IAQT…PFLV), and 167 to 187 (YYSI…IYWI). The 126-residue stretch at 174 to 299 (PLFIAFTDFC…FTTLWDRLGG (126 aa)) folds into the Fatty acid hydroxylase domain. The Histidine box-1 motif lies at 188–192 (HRGLH). A Histidine box-2 motif is present at residues 201–205 (HKPHH). Residues 231–251 (HVFPFIFPLQKLAYVFLFGFI) traverse the membrane as a helical segment. Residues 276-280 (HTMHH) carry the Histidine box-3 motif.

It belongs to the sterol desaturase family. Fe cation serves as cofactor.

It is found in the endoplasmic reticulum membrane. Delta(7)-sterol 5(6)-desaturase; part of the third module of ergosterol biosynthesis pathway that includes the late steps of the pathway. Erg3A is a minor delta(7)-sterol 5(6)-desaturase within the ergosterol pathway, erg3B being the major one. The third module or late pathway involves the ergosterol synthesis itself through consecutive reactions that mainly occur in the endoplasmic reticulum (ER) membrane. Firstly, the squalene synthase erg9 catalyzes the condensation of 2 farnesyl pyrophosphate moieties to form squalene, which is the precursor of all steroids. Squalene synthase is crucial for balancing the incorporation of farnesyl diphosphate (FPP) into sterol and nonsterol isoprene synthesis. Secondly, squalene is converted into lanosterol by the consecutive action of the squalene epoxidase erg1 and the lanosterol synthase erg7. Then, the delta(24)-sterol C-methyltransferase erg6 methylates lanosterol at C-24 to produce eburicol. Eburicol is the substrate of the sterol 14-alpha demethylase encoded by cyp51A and cyp51B, to yield 4,4,24-trimethyl ergosta-8,14,24(28)-trienol. The C-14 reductase erg24 then reduces the C14=C15 double bond which leads to 4,4-dimethylfecosterol. A sequence of further demethylations at C-4, involving the C-4 demethylation complex containing the C-4 methylsterol oxidases erg25A or erg25B, the sterol-4-alpha-carboxylate 3-dehydrogenase erg26 and the 3-keto-steroid reductase erg27, leads to the production of fecosterol via 4-methylfecosterol. The C-8 sterol isomerase erg2 then catalyzes the reaction which results in unsaturation at C-7 in the B ring of sterols and thus converts fecosterol to episterol. The sterol-C5-desaturase erg3B then catalyzes the introduction of a C-5 double bond in the B ring to produce 5-dehydroepisterol. The 2 other sterol-C5-desaturases, erg3A and erg3C, seem to be less important in ergosterol biosynthesis. The C-22 sterol desaturase erg5 further converts 5-dehydroepisterol into ergosta-5,7,22,24(28)-tetraen-3beta-ol by forming the C-22(23) double bond in the sterol side chain. Finally, ergosta-5,7,22,24(28)-tetraen-3beta-ol is substrate of the C-24(28) sterol reductases erg4A and erg4B to produce ergosterol. Possible alternative sterol biosynthetic pathways might exist from fecosterol to ergosterol, depending on the activities of the erg3 isoforms. This is Delta(7)-sterol 5(6)-desaturas erg3A from Aspergillus fumigatus (strain ATCC MYA-4609 / CBS 101355 / FGSC A1100 / Af293) (Neosartorya fumigata).